The primary structure comprises 297 residues: uncharacterized protein (297 aa).

The next 7 membrane-spanning stretches (helical) occupy residues Leu-14 to Phe-34, Leu-55 to Phe-75, Phe-81 to Leu-101, Ala-110 to Phe-130, Leu-135 to Phe-155, Ile-163 to Ile-183, and Leu-208 to Phe-228.

It localises to the cell membrane. This is an uncharacterized protein from Methanocaldococcus jannaschii (strain ATCC 43067 / DSM 2661 / JAL-1 / JCM 10045 / NBRC 100440) (Methanococcus jannaschii).